Here is a 412-residue protein sequence, read N- to C-terminus: [Pyruvate dehydrogenase (acetyl-transferring)] kinase isozyme 4, mitochondrial (412 aa).

Residues 138 to 368 enclose the Histidine kinase domain; that stretch reads ILEYKDTCTV…DAIIYLKALS (231 aa). ATP is bound by residues 254 to 261, Asp-293, 312 to 313, and 329 to 334; these read ELFKNAMR, ST, and GFGYGL.

It belongs to the PDK/BCKDK protein kinase family. Homodimer. Interacts with the pyruvate dehydrogenase complex subunit DLAT, and is part of the multimeric pyruvate dehydrogenase complex that contains multiple copies of pyruvate dehydrogenase (E1), dihydrolipoamide acetyltransferase (DLAT, E2) and lipoamide dehydrogenase (DLD, E3).

Its subcellular location is the mitochondrion matrix. It catalyses the reaction L-seryl-[pyruvate dehydrogenase E1 alpha subunit] + ATP = O-phospho-L-seryl-[pyruvate dehydrogenase E1 alpha subunit] + ADP + H(+). Its function is as follows. Kinase that plays a key role in regulation of glucose and fatty acid metabolism and homeostasis via phosphorylation of the pyruvate dehydrogenase subunits PDHA1 and PDHA2. This inhibits pyruvate dehydrogenase activity, and thereby regulates metabolite flux through the tricarboxylic acid cycle, down-regulates aerobic respiration and inhibits the formation of acetyl-coenzyme A from pyruvate. Inhibition of pyruvate dehydrogenase decreases glucose utilization and increases fat metabolism in response to prolonged fasting and starvation. Plays an important role in maintaining normal blood glucose levels under starvation, and is involved in the insulin signaling cascade. Via its regulation of pyruvate dehydrogenase activity, plays an important role in maintaining normal blood pH and in preventing the accumulation of ketone bodies under starvation. In the fed state, mediates cellular responses to glucose levels and to a high-fat diet. Regulates both fatty acid oxidation and de novo fatty acid biosynthesis. Plays a role in the generation of reactive oxygen species. Protects detached epithelial cells against anoikis. Plays a role in cell proliferation via its role in regulating carbohydrate and fatty acid metabolism. The sequence is that of [Pyruvate dehydrogenase (acetyl-transferring)] kinase isozyme 4, mitochondrial (Pdk4) from Mus musculus (Mouse).